Here is a 235-residue protein sequence, read N- to C-terminus: Ribosomal RNA small subunit methyltransferase G (235 aa).

S-adenosyl-L-methionine contacts are provided by residues Gly75, Phe80, Ala126–Glu127, and Arg145.

This sequence belongs to the methyltransferase superfamily. RNA methyltransferase RsmG family.

It localises to the cytoplasm. Functionally, specifically methylates the N7 position of a guanine in 16S rRNA. This Carboxydothermus hydrogenoformans (strain ATCC BAA-161 / DSM 6008 / Z-2901) protein is Ribosomal RNA small subunit methyltransferase G.